We begin with the raw amino-acid sequence, 354 residues long: MTALKNDRFLRALLKQPVDVTPVWMMRQAGRYLPEYRASRAKAGDFMSLCMNPQFACEVTLQPLDRYPLDAAILFSDILTIPDAMGLGLYFETGEGPRFKKVISTPADIEALPVPDPQKDLGYVMDAVSTIRRELNGRVPLIGFSGSPWTLATYMVEGGSSKDFRKTKAMAYDNPQALHLLLDKLAQSVTSYLNGQILAGAQAVQIFDTWGGNLSAAAYQEFSLAYMRKIVSGLIREHEGRKVPVILFTKNGGLWLESIAEAGADALGLDWTCEIGDARRRVGDKVALQGNMDPTVLYAKPEAIRKEVARILASYGHGTGHVFNLGHGITPEVDPEHAGAFINAVHELSAQYHQ.

Substrate-binding positions include 27–31, Phe-46, Asp-77, Tyr-154, Thr-209, and His-327; that span reads RQAGR.

It belongs to the uroporphyrinogen decarboxylase family. In terms of assembly, homodimer.

It localises to the cytoplasm. The catalysed reaction is uroporphyrinogen III + 4 H(+) = coproporphyrinogen III + 4 CO2. The protein operates within porphyrin-containing compound metabolism; protoporphyrin-IX biosynthesis; coproporphyrinogen-III from 5-aminolevulinate: step 4/4. Catalyzes the decarboxylation of four acetate groups of uroporphyrinogen-III to yield coproporphyrinogen-III. The polypeptide is Uroporphyrinogen decarboxylase (Pseudomonas putida (strain ATCC 47054 / DSM 6125 / CFBP 8728 / NCIMB 11950 / KT2440)).